The following is a 438-amino-acid chain: GDP-mannose 6-dehydrogenase (438 aa).

Residues tyrosine 10, valine 11, aspartate 30, lysine 35, threonine 86, and threonine 124 each coordinate NAD(+). Glutamate 161, lysine 210, asparagine 214, histidine 217, asparagine 225, tyrosine 256, tyrosine 257, arginine 259, phenylalanine 262, and glycine 265 together coordinate GDP-alpha-D-mannuronate. Cysteine 268 is an active-site residue. An NAD(+)-binding site is contributed by lysine 271. Lysine 324 lines the GDP-alpha-D-mannuronate pocket. Position 331 (arginine 331) interacts with NAD(+).

It belongs to the UDP-glucose/GDP-mannose dehydrogenase family.

It carries out the reaction GDP-alpha-D-mannose + 2 NAD(+) + H2O = GDP-alpha-D-mannuronate + 2 NADH + 3 H(+). The protein operates within glycan biosynthesis; alginate biosynthesis. Its function is as follows. Catalyzes the oxidation of guanosine diphospho-D-mannose (GDP-D-mannose) to GDP-D-mannuronic acid, a precursor for alginate polymerization. The alginate layer causes a mucoid phenotype and provides a protective barrier against host immune defenses and antibiotics. The protein is GDP-mannose 6-dehydrogenase (algD) of Pseudomonas putida (strain ATCC 47054 / DSM 6125 / CFBP 8728 / NCIMB 11950 / KT2440).